Consider the following 460-residue polypeptide: Biphenyl 2,3-dioxygenase subunit alpha (460 aa).

Residues tryptophan 56–alanine 165 form the Rieske domain. Residues cysteine 98, histidine 100, cysteine 118, and histidine 121 each contribute to the [2Fe-2S] cluster site. Glutamine 217–histidine 230 contacts substrate. Histidine 224, histidine 230, and aspartate 378 together coordinate Fe cation.

It belongs to the bacterial ring-hydroxylating dioxygenase alpha subunit family. As to quaternary structure, heterohexamer consisting of three BphA1 subunits and three BphA2 subunits. The multicomponent biphenyl dioxygenase system is composed of a ferredoxin reductase (BphA4), a ferredoxin (BphA3), and a terminal oxygenase (BphA1A2). It depends on [2Fe-2S] cluster as a cofactor. Requires Fe cation as cofactor.

The catalysed reaction is biphenyl + NADH + O2 + H(+) = (2R,3S)-3-phenylcyclohexa-3,5-diene-1,2-diol + NAD(+). Its pathway is xenobiotic degradation; biphenyl degradation; 2-hydroxy-2,4-pentadienoate and benzoate from biphenyl: step 1/4. Part of the oxygenase component of the biphenyl dioxygenase system that catalyzes the stereospecific dihydroxylation of the aromatic ring of biphenyl, yielding a dihydrodiol compound. Is essential for biphenyl degradation and growth of Rhodococcus sp. strain RHA1 on biphenyl as the sole source of carbon and energy. Can also use naphtalene and 4-chlorobiphenyl (4-CB) as substrates, as well as some polychlorinated biphenyls (PCB) such as 2,2'-dichlorobiphenyl, 2,3-dichlorobiphenyl and 2,5,2'-trichlorobiphenyl. Exhibits weak activity toward dibenzofuran and dibenzo-p-dioxin. Electrons are transferred from NADH to the [2Fe-2S] cluster in BphA1 via FAD of BphA4 and [2Fe-2S] cluster of BphA3. The sequence is that of Biphenyl 2,3-dioxygenase subunit alpha from Rhodococcus jostii (strain RHA1).